Reading from the N-terminus, the 193-residue chain is Biphenyl dioxygenase subunit beta (193 aa).

This sequence belongs to the bacterial ring-hydroxylating dioxygenase beta subunit family. Heterohexamer consisting of 3 BphA1 subunits and 3 BphA2 subunits. A ferredoxin (BphA3) and a ferredoxin reductase (BphA4) must be present to obtain activity.

The catalysed reaction is biphenyl + NADH + O2 + H(+) = (2R,3S)-3-phenylcyclohexa-3,5-diene-1,2-diol + NAD(+). The protein operates within xenobiotic degradation; biphenyl degradation; 2-hydroxy-2,4-pentadienoate and benzoate from biphenyl: step 1/4. The beta subunit may be responsible for the substrate specificity of the enzyme. The protein is Biphenyl dioxygenase subunit beta (bphA2) of Pseudomonas sp. (strain KKS102).